A 331-amino-acid chain; its full sequence is Putative NAD(P)H nitroreductase acg (331 aa).

FMN-binding positions include 28–32 and Arg316; that span reads QPWRW.

This sequence belongs to the nitroreductase family. FMN is required as a cofactor.

The sequence is that of Putative NAD(P)H nitroreductase acg (acg) from Mycobacterium tuberculosis (strain CDC 1551 / Oshkosh).